Here is a 339-residue protein sequence, read N- to C-terminus: DNA-directed RNA polymerase subunit alpha (339 aa).

Residues Met1–Glu233 are alpha N-terminal domain (alpha-NTD). The interval Gly266–Leu339 is alpha C-terminal domain (alpha-CTD).

This sequence belongs to the RNA polymerase alpha chain family. As to quaternary structure, in plastids the minimal PEP RNA polymerase catalytic core is composed of four subunits: alpha, beta, beta', and beta''. When a (nuclear-encoded) sigma factor is associated with the core the holoenzyme is formed, which can initiate transcription.

The protein resides in the plastid. The protein localises to the chloroplast. The enzyme catalyses RNA(n) + a ribonucleoside 5'-triphosphate = RNA(n+1) + diphosphate. In terms of biological role, DNA-dependent RNA polymerase catalyzes the transcription of DNA into RNA using the four ribonucleoside triphosphates as substrates. This chain is DNA-directed RNA polymerase subunit alpha, found in Sorghum bicolor (Sorghum).